We begin with the raw amino-acid sequence, 308 residues long: MWKQDETLEQIVLECKKYTEEGTVASYIPALAKADVSTLGIAIYRGGDEQVIAGDADEKFTLQSISKVIALALALLDVGEEAVFSKVGMEPTGDPFNSISKLETSVPSKPLNPMINAGALAVTNMIIGETTEQSLGRLLSFIHELTKNPTITYNLEVAQSEFDTAFLNRSLSYFLKQHGVIQADVEQLLDLYTKQCAIEMCCSDLARIGYVFANEGRDPDTGQRIVPLHVARIIKTFMVTCGMYNASGEFAIRVGIPAKSGVSGAILALVPNKYGIAVYSPALDEKGNSLAGIKLLETLSCREEWSIF.

Residues Ser64, Asn116, Glu161, Asn168, Tyr192, Tyr244, and Val262 each contribute to the substrate site.

The protein belongs to the glutaminase family. As to quaternary structure, homotetramer.

The catalysed reaction is L-glutamine + H2O = L-glutamate + NH4(+). This chain is Glutaminase 1, found in Halalkalibacterium halodurans (strain ATCC BAA-125 / DSM 18197 / FERM 7344 / JCM 9153 / C-125) (Bacillus halodurans).